Reading from the N-terminus, the 167-residue chain is Protein archease (167 aa).

Residue alanine 2 is modified to N-acetylalanine. Residues aspartate 39, aspartate 166, and isoleucine 167 each contribute to the Ca(2+) site.

The protein belongs to the archease family. As to quaternary structure, component of the tRNA-splicing ligase complex.

Its function is as follows. Component of the tRNA-splicing ligase complex required to facilitate the enzymatic turnover of catalytic subunit RTCB. Together with DDX1, acts by facilitating the guanylylation of RTCB, a key intermediate step in tRNA ligation. The protein is Protein archease (ZBTB8OS) of Bos taurus (Bovine).